The following is a 946-amino-acid chain: DDB1- and CUL4-associated factor 5 (946 aa).

WD repeat units lie at residues 51 to 91 (GHFG…HSRV), 99 to 139 (EHHS…LDVF), 140 to 180 (AHED…HGEP), 185 to 225 (NYPS…SSLL), 277 to 317 (FNSC…EAGG), and 331 to 370 (GHRS…GCTG). Residues 449–478 (GVSERSGYTDSESSASLPRSPPPTVDESAD) form a disordered region. Residues 454–465 (SGYTDSESSASL) show a composition bias toward polar residues. Thr500 is modified (phosphothreonine). Disordered stretches follow at residues 527–656 (LSNE…MESV), 675–860 (SNNK…ELET), and 894–946 (CETP…KLKT). A phosphoserine mark is found at Ser531 and Ser533. A compositionally biased stretch (acidic residues) spans 531–544 (SDSEENVCEAELDT). Positions 555-567 (PEDGSSSPSSSTS) are enriched in low complexity. Residues 579-592 (ATTRQRNAMRRRQK) show a composition bias toward basic residues. The span at 625–638 (LSPSPDSSPERSAS) shows a compositional bias: low complexity. Phosphoserine is present on residues Ser626, Ser628, and Ser645. Over residues 691–701 (EGRAGTSHKDN) the composition is skewed to basic and acidic residues. 2 stretches are compositionally biased toward polar residues: residues 760 to 769 (GTSQDTNNSG) and 808 to 819 (TLNSASGNCPRT).

Interacts with DDB1, CUL4A or CUL4B. Interacts with L3MBTL3. Interacts with SOX2. Interacts with DNMT1. Interacts with E2F1.

Its pathway is protein modification; protein ubiquitination. Its function is as follows. Is a substrate receptor for the CUL4-DDB1 E3 ubiquitin-protein ligase complex (CRL4), involved in the ubiquitination of a set of methylated non-histone proteins, including SOX2. The complex CRL4-DCAF5 is also involved in the ubiquitination of methylated DNMT1 and E2F1. This Mus musculus (Mouse) protein is DDB1- and CUL4-associated factor 5 (Dcaf5).